The primary structure comprises 456 residues: RuvB-like 1 (456 aa).

Residue 70–77 participates in ATP binding; that stretch reads GPPGTGKT.

The protein belongs to the RuvB family. Forms homohexameric rings. Can form a dodecamer with ruvbl2 made of two stacked hexameric rings. Is a component of the RNA polymerase II holoenzyme complex. Component of the chromatin-remodeling Ino80 complex. Component of some MLL1/MLL complex.

The protein localises to the nucleus. Its subcellular location is the dynein axonemal particle. The catalysed reaction is ATP + H2O = ADP + phosphate + H(+). In terms of biological role, has single-stranded DNA-stimulated ATPase and ATP-dependent DNA helicase (3' to 5') activity suggesting a role in nuclear processes such as recombination and transcription. Proposed core component of the chromatin remodeling INO80 complex which exhibits DNA- and nucleosome-activated ATPase activity and catalyzes ATP-dependent nucleosome sliding. This chain is RuvB-like 1 (ruvbl1), found in Xenopus laevis (African clawed frog).